The chain runs to 296 residues: Polyamine aminopropyltransferase (296 aa).

The region spanning 5-238 is the PABS domain; the sequence is ELWYETLHAN…GIMTFAWATQ (234 aa). S-methyl-5'-thioadenosine is bound at residue Gln33. Spermidine-binding residues include His64 and Asp88. S-methyl-5'-thioadenosine is bound by residues Glu108 and 140–141; that span reads DG. Asp158 serves as the catalytic Proton acceptor. 158-161 contributes to the spermidine binding site; sequence DCTD. Pro165 is an S-methyl-5'-thioadenosine binding site.

It belongs to the spermidine/spermine synthase family. Homodimer or homotetramer.

The protein resides in the cytoplasm. The enzyme catalyses S-adenosyl 3-(methylsulfanyl)propylamine + putrescine = S-methyl-5'-thioadenosine + spermidine + H(+). Its pathway is amine and polyamine biosynthesis; spermidine biosynthesis; spermidine from putrescine: step 1/1. Its function is as follows. Catalyzes the irreversible transfer of a propylamine group from the amino donor S-adenosylmethioninamine (decarboxy-AdoMet) to putrescine (1,4-diaminobutane) to yield spermidine. The chain is Polyamine aminopropyltransferase from Yersinia pseudotuberculosis serotype O:1b (strain IP 31758).